We begin with the raw amino-acid sequence, 288 residues long: Homoserine kinase (288 aa).

Residue 79 to 89 (PPARGLGSSSA) coordinates ATP.

The protein belongs to the GHMP kinase family. Homoserine kinase subfamily.

It localises to the cytoplasm. It catalyses the reaction L-homoserine + ATP = O-phospho-L-homoserine + ADP + H(+). The protein operates within amino-acid biosynthesis; L-threonine biosynthesis; L-threonine from L-aspartate: step 4/5. In terms of biological role, catalyzes the ATP-dependent phosphorylation of L-homoserine to L-homoserine phosphate. In Listeria monocytogenes serotype 4b (strain F2365), this protein is Homoserine kinase.